A 149-amino-acid chain; its full sequence is MKVLLLEDVKNLGKAGEVCEVKDGYGNNFLIANQKAKLATNEVINKYKAEVKKKAEKEALEKAQKLQMVETLQTITLTIHKKVGANGSLFGAITKEEITERLKEQHASLNLDKKDIELKHPIKSTGIYEIEVKLGSGVVGVFKIDVVAE.

This sequence belongs to the bacterial ribosomal protein bL9 family.

In terms of biological role, binds to the 23S rRNA. This chain is Large ribosomal subunit protein bL9, found in Helicobacter pylori (strain ATCC 700392 / 26695) (Campylobacter pylori).